Consider the following 485-residue polypeptide: E-selectin (485 aa).

The N-terminal stretch at 1–22 (MIVSQYLSALTFVLLLFKESRT) is a signal peptide. The C-type lectin domain maps to 23–140 (WSYHASTEMM…CTKQKLALCY (118 aa)). The Extracellular portion of the chain corresponds to 23 to 430 (WSYHASTEMM…CEAPTVSQTP (408 aa)). Intrachain disulfides connect cysteine 41–cysteine 139, cysteine 112–cysteine 131, cysteine 144–cysteine 155, cysteine 149–cysteine 164, cysteine 166–cysteine 175, cysteine 181–cysteine 224, cysteine 194–cysteine 206, cysteine 210–cysteine 237, cysteine 242–cysteine 286, cysteine 255–cysteine 268, cysteine 272–cysteine 299, cysteine 304–cysteine 349, cysteine 335–cysteine 362, cysteine 367–cysteine 408, and cysteine 394–cysteine 421. N-linked (GlcNAc...) asparagine glycosylation is found at asparagine 61, asparagine 79, and asparagine 88. Positions 102, 104, and 110 each coordinate Ca(2+). A carbohydrate contacts are provided by residues 102–110 (EPNNKQSDE), 114–119 (EIYIKR), and 127–129 (NDE). Residues asparagine 127 and aspartate 128 each coordinate Ca(2+). The region spanning 141–176 (KAACNPTPCGSHGECVETINNYTCQCHPGFKGLKCE) is the EGF-like domain. N-linked (GlcNAc...) asparagine glycosylation is present at asparagine 161. Sushi domains are found at residues 179-239 (VTCP…KCNV), 240-301 (VKCD…TCKA), 302-364 (VSCA…VCEV), and 365-423 (VRCS…TCEA). The N-linked (GlcNAc...) asparagine glycan is linked to asparagine 203. N-linked (GlcNAc...) asparagine glycosylation occurs at asparagine 265. N-linked (GlcNAc...) asparagine glycans are attached at residues asparagine 312 and asparagine 316. Asparagine 379 and asparagine 401 each carry an N-linked (GlcNAc...) asparagine glycan. A helical transmembrane segment spans residues 431–453 (LAVGLSTAGVSLVTIPSFLFWLL). Over 454–485 (KRLQKKAKKFSPASSCSSLKSNGCYSTPSKLI) the chain is Cytoplasmic. Residues 466-485 (ASSCSSLKSNGCYSTPSKLI) form a disordered region.

The protein belongs to the selectin/LECAM family. Interacts with SELPLG/PSGL1 and PODXL2 through the sialyl Lewis X epitope. SELPLG sulfation appears not to be required for this interaction.

Its subcellular location is the cell membrane. Cell-surface glycoprotein having a role in immunoadhesion. Mediates in the adhesion of blood neutrophils in cytokine-activated endothelium through interaction with SELPLG/PSGL1. May have a role in capillary morphogenesis. This Bos taurus (Bovine) protein is E-selectin (SELE).